The following is a 473-amino-acid chain: Inactive pancreatic lipase-related protein 1 (473 aa).

A signal peptide spans 1–17 (MLILWTIPLFLLGAAQG). 2 disulfide bridges follow: cysteine 21–cysteine 27 and cysteine 109–cysteine 120. The Nucleophile role is filled by serine 171. The active-site Charge relay system is the aspartate 194. Residues glutamate 205, arginine 208, aspartate 210, and aspartate 213 each coordinate Ca(2+). The cysteines at positions 255 and 279 are disulfide-linked. Histidine 281 functions as the Charge relay system in the catalytic mechanism. 3 disulfide bridges follow: cysteine 303–cysteine 314, cysteine 317–cysteine 322, and cysteine 451–cysteine 467. The 112-residue stretch at 356 to 467 (WRYRVSLTFS…EDILLTLLPC (112 aa)) folds into the PLAT domain.

Belongs to the AB hydrolase superfamily. Lipase family. Expressed in female, but not in male, lacrimal gland. Expressed in male and female sublingual gland and pancreas.

The protein localises to the secreted. May function as inhibitor of dietary triglyceride digestion. Lacks detectable lipase activity (in vitro). The protein is Inactive pancreatic lipase-related protein 1 (Pnliprp1) of Mus musculus (Mouse).